The primary structure comprises 365 residues: tRNA/tmRNA (uracil-C(5))-methyltransferase (365 aa).

Positions 189, 217, 222, 238, and 298 each coordinate S-adenosyl-L-methionine. The Nucleophile role is filled by Cys323. The active-site Proton acceptor is Glu357.

It belongs to the class I-like SAM-binding methyltransferase superfamily. RNA M5U methyltransferase family. TrmA subfamily.

The catalysed reaction is uridine(54) in tRNA + S-adenosyl-L-methionine = 5-methyluridine(54) in tRNA + S-adenosyl-L-homocysteine + H(+). It carries out the reaction uridine(341) in tmRNA + S-adenosyl-L-methionine = 5-methyluridine(341) in tmRNA + S-adenosyl-L-homocysteine + H(+). Functionally, dual-specificity methyltransferase that catalyzes the formation of 5-methyluridine at position 54 (m5U54) in all tRNAs, and that of position 341 (m5U341) in tmRNA (transfer-mRNA). In Shewanella sediminis (strain HAW-EB3), this protein is tRNA/tmRNA (uracil-C(5))-methyltransferase.